The chain runs to 314 residues: Homoserine kinase (314 aa).

95–105 (PHSRGLGSSAS) serves as a coordination point for ATP.

The protein belongs to the GHMP kinase family. Homoserine kinase subfamily.

Its subcellular location is the cytoplasm. The catalysed reaction is L-homoserine + ATP = O-phospho-L-homoserine + ADP + H(+). Its pathway is amino-acid biosynthesis; L-threonine biosynthesis; L-threonine from L-aspartate: step 4/5. Catalyzes the ATP-dependent phosphorylation of L-homoserine to L-homoserine phosphate. The polypeptide is Homoserine kinase (Rhodococcus opacus (strain B4)).